The chain runs to 73 residues: Arabinogalactan protein 16 (73 aa).

Residues 1-26 (MASRNSVTGFALFSFVFAVILSLAGA) form the signal peptide. Position 27 is a pyrrolidone carboxylic acid (glutamine 27). A 4-hydroxyproline mark is found at proline 31, proline 33, and proline 35. O-linked (Ara...) hydroxyproline glycosylation is found at proline 31, proline 33, and proline 35. Serine 37 carries the GPI-anchor amidated serine lipid modification. The propeptide at 38–73 (DGTSIDQGIAYLLMVVALVLTYLIHPLDASSSYSFF) is removed in mature form.

This sequence belongs to the AG-peptide AGP family. Contains 4-hydroxyproline; hydroxylated on Pro-31, Pro-33 and Pro-35. In terms of processing, O-glycosylated on hydroxyprolines; noncontiguous hydroxylproline residues are glycosylated with arabinogalactan. Predominantly expressed in flowers.

The protein localises to the cell membrane. Its function is as follows. Proteoglycan that seems to be implicated in diverse developmental roles such as differentiation, cell-cell recognition, embryogenesis and programmed cell death. This chain is Arabinogalactan protein 16, found in Arabidopsis thaliana (Mouse-ear cress).